A 202-amino-acid chain; its full sequence is Josephin-1 (202 aa).

Residues 1-22 are disordered; the sequence is MSCVPWKGDKAKAESSDLPQAA. Serine 15 carries the post-translational modification Phosphoserine. The 180-residue stretch at 23–202 folds into the Josephin domain; it reads PPQIYHEKQR…EAHQSWRADV (180 aa). The active-site Nucleophile is cysteine 36. The Proton acceptor role is filled by histidine 139.

Interacts with beta-actin/ACTB. Monoubiquitinated. Ubiquitination activates deubiquitination activity in vitro. In terms of tissue distribution, widely expressed (at protein level).

It localises to the cell membrane. It is found in the cytoplasm. It catalyses the reaction Thiol-dependent hydrolysis of ester, thioester, amide, peptide and isopeptide bonds formed by the C-terminal Gly of ubiquitin (a 76-residue protein attached to proteins as an intracellular targeting signal).. In terms of biological role, deubiquitinates monoubiquitinated probes (in vitro). When ubiquitinated, cleaves 'Lys-63'-linked and 'Lys-48'-linked poly-ubiquitin chains (in vitro), hence may act as a deubiquitinating enzyme. May increase macropinocytosis and suppress clathrin- and caveolae-mediated endocytosis. May enhance membrane dynamics and cell motility independently of its catalytic activity. In Mus musculus (Mouse), this protein is Josephin-1 (Josd1).